A 252-amino-acid polypeptide reads, in one-letter code: Glycerol-3-phosphate acyltransferase (252 aa).

The next 6 membrane-spanning stretches (helical) occupy residues 6 to 26 (SVAM…YLIG), 66 to 86 (ILTL…TYII), 104 to 124 (AILV…PIFF), 140 to 160 (ITID…ILLI), 164 to 184 (MSLS…IPGI), and 204 to 224 (VIKG…ILIY).

This sequence belongs to the PlsY family. As to quaternary structure, probably interacts with PlsX.

The protein localises to the cell membrane. It catalyses the reaction an acyl phosphate + sn-glycerol 3-phosphate = a 1-acyl-sn-glycero-3-phosphate + phosphate. It functions in the pathway lipid metabolism; phospholipid metabolism. In terms of biological role, catalyzes the transfer of an acyl group from acyl-phosphate (acyl-PO(4)) to glycerol-3-phosphate (G3P) to form lysophosphatidic acid (LPA). This enzyme utilizes acyl-phosphate as fatty acyl donor, but not acyl-CoA or acyl-ACP. The protein is Glycerol-3-phosphate acyltransferase of Ureaplasma urealyticum serovar 10 (strain ATCC 33699 / Western).